A 64-amino-acid polypeptide reads, in one-letter code: Epidermal growth factor (64 aa).

A signal peptide spans 1–21; the sequence is MMRHLLLVGAAILIFVSDAQA. Gln-22 is subject to Pyrrolidone carboxylic acid. Positions 25–61 constitute an EGF-like domain; sequence GEDPCQIVRCSYGANCIAYGDTAICECPFGYSGIRCQ. 3 disulfides stabilise this stretch: Cys-29/Cys-40, Cys-34/Cys-49, and Cys-51/Cys-60.

In terms of tissue distribution, albumen gland. Up-regulated in adult CNS after axotomy.

It is found in the secreted. Induces neurite outgrowth in specific adult neurons in vitro. The polypeptide is Epidermal growth factor (Lymnaea stagnalis (Great pond snail)).